Here is a 127-residue protein sequence, read N- to C-terminus: UPF0102 protein Mmwyl1_2395 (127 aa).

It belongs to the UPF0102 family.

This chain is UPF0102 protein Mmwyl1_2395, found in Marinomonas sp. (strain MWYL1).